The chain runs to 218 residues: Type II restriction enzyme KpnI (218 aa).

The enzyme catalyses Endonucleolytic cleavage of DNA to give specific double-stranded fragments with terminal 5'-phosphates.. Its function is as follows. A P subtype restriction enzyme that recognizes the double-stranded sequence 5'-GGTACC-3' and cleaves after C-5. This is Type II restriction enzyme KpnI from Klebsiella pneumoniae.